Reading from the N-terminus, the 517-residue chain is UDP-N-acetylmuramoylalanine--D-glutamate ligase (517 aa).

An ATP-binding site is contributed by 143-149 (GTNGKTT).

This sequence belongs to the MurCDEF family.

The protein resides in the cytoplasm. It carries out the reaction UDP-N-acetyl-alpha-D-muramoyl-L-alanine + D-glutamate + ATP = UDP-N-acetyl-alpha-D-muramoyl-L-alanyl-D-glutamate + ADP + phosphate + H(+). It participates in cell wall biogenesis; peptidoglycan biosynthesis. Cell wall formation. Catalyzes the addition of glutamate to the nucleotide precursor UDP-N-acetylmuramoyl-L-alanine (UMA). The sequence is that of UDP-N-acetylmuramoylalanine--D-glutamate ligase from Leifsonia xyli subsp. xyli (strain CTCB07).